A 299-amino-acid polypeptide reads, in one-letter code: F-actin-capping protein subunit alpha-3 (299 aa).

2 positions are modified to phosphoserine: Ser-2 and Ser-290.

This sequence belongs to the F-actin-capping protein alpha subunit family. As to quaternary structure, component of the F-actin capping complex, composed of a heterodimer of an alpha and a beta subunit. Component of the WASH complex, composed of F-actin-capping protein subunit alpha (CAPZA1, CAPZA2 or CAPZA3), F-actin-capping protein subunit beta (CAPZB), WASHC1, WASHC2, WASHC3, WASHC4 and WASHC5. Exclusively expressed in the testis.

It localises to the cytoplasm. The protein resides in the cytoskeleton. Functionally, F-actin-capping proteins bind in a Ca(2+)-independent manner to the fast growing ends of actin filaments (barbed end) thereby blocking the exchange of subunits at these ends. Unlike other capping proteins (such as gelsolin and severin), these proteins do not sever actin filaments. May play a role in the morphogenesis of spermatid. This Rattus norvegicus (Rat) protein is F-actin-capping protein subunit alpha-3 (Capza3).